Consider the following 449-residue polypeptide: Aspartate aminotransferase 3, chloroplastic (449 aa).

The transit peptide at 1-43 (MKTTHFSSSSSSDRRIGALLRHLNSGSDSDNLSSLYASPTSGG) directs the protein to the chloroplast. L-aspartate contacts are provided by G81, W178, and N231. Position 295 is an N6-(pyridoxal phosphate)lysine (K295). R423 serves as a coordination point for L-aspartate.

The protein belongs to the class-I pyridoxal-phosphate-dependent aminotransferase family. As to quaternary structure, homodimer. Requires pyridoxal 5'-phosphate as cofactor. Expressed in roots, cauline leaves, flowers, hypocotyl epidermis and root hair cells.

The protein localises to the plastid. The protein resides in the chloroplast. The enzyme catalyses L-aspartate + 2-oxoglutarate = oxaloacetate + L-glutamate. Functionally, amino acid aminotransferase important for the metabolism of amino acids and Krebs-cycle related organic acids. No activity with D-Asp or D-Ala as amino donors. In plants, it is involved in nitrogen metabolism and in aspects of carbon and energy metabolism. The chain is Aspartate aminotransferase 3, chloroplastic (ASP3) from Arabidopsis thaliana (Mouse-ear cress).